Reading from the N-terminus, the 359-residue chain is DNA integrity scanning protein DisA (359 aa).

Residues 7 to 146 (DDIFRATLAA…GRRYVLDGSA (140 aa)) enclose the DAC domain. ATP is bound by residues G74, L92, and 105 to 109 (TRHRT).

This sequence belongs to the DisA family. Homooctamer. Mg(2+) is required as a cofactor.

The catalysed reaction is 2 ATP = 3',3'-c-di-AMP + 2 diphosphate. Its function is as follows. Participates in a DNA-damage check-point that is active prior to asymmetric division when DNA is damaged. DisA forms globular foci that rapidly scan along the chromosomes during sporulation, searching for lesions. When a lesion is present, DisA pauses at the lesion site. This triggers a cellular response that culminates in a temporary block in sporulation initiation. Also has diadenylate cyclase activity, catalyzing the condensation of 2 ATP molecules into cyclic di-AMP (c-di-AMP). c-di-AMP acts as a signaling molecule that couples DNA integrity with progression of sporulation. The rise in c-di-AMP level generated by DisA while scanning the chromosome, operates as a positive signal that advances sporulation; upon encountering a lesion, the DisA focus arrests at the damaged site and halts c-di-AMP synthesis. This is DNA integrity scanning protein DisA from Frankia casuarinae (strain DSM 45818 / CECT 9043 / HFP020203 / CcI3).